A 297-amino-acid polypeptide reads, in one-letter code: Bifunctional protein FolD 1 (297 aa).

Residues 174-176 (GRS), S199, and I240 each bind NADP(+).

The protein belongs to the tetrahydrofolate dehydrogenase/cyclohydrolase family. Homodimer.

It catalyses the reaction (6R)-5,10-methylene-5,6,7,8-tetrahydrofolate + NADP(+) = (6R)-5,10-methenyltetrahydrofolate + NADPH. The enzyme catalyses (6R)-5,10-methenyltetrahydrofolate + H2O = (6R)-10-formyltetrahydrofolate + H(+). It functions in the pathway one-carbon metabolism; tetrahydrofolate interconversion. Catalyzes the oxidation of 5,10-methylenetetrahydrofolate to 5,10-methenyltetrahydrofolate and then the hydrolysis of 5,10-methenyltetrahydrofolate to 10-formyltetrahydrofolate. The protein is Bifunctional protein FolD 1 of Acinetobacter baylyi (strain ATCC 33305 / BD413 / ADP1).